A 474-amino-acid chain; its full sequence is uncharacterized protein (474 aa).

A run of 10 helical transmembrane segments spans residues 17–39 (ILGG…SVYY), 44–61 (FLNF…GFVL), 81–103 (LAWL…YFSY), 144–166 (GVGI…YLLY), 186–208 (IIWI…GLSF), 239–256 (IVMI…FSIH), 268–286 (IQTK…IISI), 319–341 (LSLF…TGGV), 385–407 (AFVV…IALG), and 444–466 (IIAM…TLYF).

It belongs to the TrkH potassium transport family.

It localises to the cell membrane. This is an uncharacterized protein from Methanocaldococcus jannaschii (strain ATCC 43067 / DSM 2661 / JAL-1 / JCM 10045 / NBRC 100440) (Methanococcus jannaschii).